A 442-amino-acid polypeptide reads, in one-letter code: Pyruvate dehydrogenase complex protein X component, mitochondrial (442 aa).

Residues 1–35 constitute a mitochondrion transit peptide; it reads MASLAAACRVSARLAARKLQHDAAVRGFRSSAAAL. Residues 37–113 form the Lipoyl-binding domain; sequence AQNFMMPALS…QVGTRIAVVA (77 aa). The residue at position 78 (Lys-78) is an N6-lipoyllysine. The interval 119-169 is disordered; that stretch reads ITKLEIPPDEGPQQLKAAAPAPAPTPAPAPASPQPQFAAPTPSPPKASTKV. The segment covering 139 to 151 has biased composition (pro residues); sequence APAPTPAPAPASP. The segment covering 152-169 has biased composition (low complexity); sequence QPQFAAPTPSPPKASTKV. The Peripheral subunit-binding (PSBD) domain occupies 175 to 215; it reads PLLPSVHQLIKENGLDESAVSNITPTGPGGRILKGDVLAYL. The tract at residues 244–269 is disordered; sequence AKPVEPEKPQEEKASAPAPAPRAPEP. Residues 245–257 show a composition bias toward basic and acidic residues; that stretch reads KPVEPEKPQEEKA. An interaction to the E2 core region spans residues 317 to 336; sequence PLPTNYQPTADELFDQVLGL.

This sequence belongs to the 2-oxoacid dehydrogenase family. Eukaryotic pyruvate dehydrogenase (PDH) complexes are organized as a core consisting of the oligomeric dihydrolipoamide acetyl-transferase (E2), around which are arranged multiple copies of pyruvate dehydrogenase (E1), dihydrolipoamide dehydrogenase (E3) and protein X (E3BP) bound by non-covalent bonds. The Chaetomium thermophilum PDH complex contains 60 E2 units, 12 E3BP units, about 20 E1 units, and 12 or more E3 units. The units are organized in 1 E2 60-mer, 4 E3BP trimers, about 20 E1 tetramers, and a maximum of 12 E3 dimers. The E3BP trimers are bound inside the icosahedral core with tetrahedral symmetry.

It is found in the mitochondrion. In terms of biological role, the 10-megadalton pyruvate dehydrogenase complex contains multiple copies of three enzymatic components: pyruvate dehydrogenase (E1), dihydrolipoamide acetyltransferase (E2) and lipoamide dehydrogenase (E3) and catalyzes the overall oxidative decarboxylation of pyruvate to form acetyl-CoA and CO(2). E3BP is responsible for tethering E3 in proximity to the core, forming the entire metabolon, and the number of E3s is limited by the number of E3BPs. Within the complex, pyruvate and thiamine pyrophosphate (TPP or vitamin B1) are bound by pyruvate dehydrogenase E1 subunits alpha and beta and pyruvate is decarboxylated leading to the 2-carbon hydrohyethyl bound to TPP. The E2 component contains covalently-bound lipoyl cofactors and transfers the hydroxyethyl group from TPP to an oxidized form of covalently bound lipoamide, and the resulting acetyl group is then transferred to free coenzyme A to form acetyl-CoA and reduced dihydrolipoamide-E2. Finally, the flavoprotein dihydrolipoamide dehydrogenase (E3) re-oxidizes the lipoyl group of dihydrolipoamide-E2 to form lipoamide-E2 and NADH. A fourth subunit, E3BP, is responsible for tethering E3 in proximity to the core, forming the entire metabolon. The chain is Pyruvate dehydrogenase complex protein X component, mitochondrial from Chaetomium thermophilum (strain DSM 1495 / CBS 144.50 / IMI 039719) (Thermochaetoides thermophila).